Reading from the N-terminus, the 131-residue chain is UPF0292 protein PF1724 (131 aa).

Positions 20–103 (KGVIIVEGKR…ETRRELQFIA (84 aa)) constitute a Toprim domain. Mg(2+)-binding residues include Glu-26, Asp-69, and Asp-71.

The protein belongs to the UPF0292 family. It depends on Mg(2+) as a cofactor.

The chain is UPF0292 protein PF1724 from Pyrococcus furiosus (strain ATCC 43587 / DSM 3638 / JCM 8422 / Vc1).